We begin with the raw amino-acid sequence, 395 residues long: RNA polymerase II elongation factor ELL3 (395 aa).

Disordered regions lie at residues 124-149, 163-182, 194-218, and 233-279; these read SSLQRHNRTEDARDRESWQNVGDYPE, VPDPLASSQGQSLPGSSREH, LPNRDPDQALPPSASQKHVDKKRPA, and LAPS…SLSP. Residues 130–140 show a composition bias toward basic and acidic residues; sequence NRTEDARDRES. Residues 168–177 are compositionally biased toward polar residues; that stretch reads ASSQGQSLPG. Positions 246–258 are enriched in acidic residues; the sequence is LQEEDWEQEDKDE. Polar residues predominate over residues 268 to 277; sequence PSVQADSESL. Residues 283–393 enclose the OCEL domain; the sequence is PDYLLQYRAI…LILEFEEKNR (111 aa).

This sequence belongs to the ELL/occludin family. Interacts with AFF4. Component of the super elongation complex (SEC), at least composed of EAF1, EAF2, CDK9, MLLT3/AF9, AFF (AFF1 or AFF4), the P-TEFb complex and ELL (ELL, ELL2 or ELL3). Component of the little elongation complex (LEC), at least composed of ELL (ELL, ELL2 or ELL3), ZC3H8, ICE1 and ICE2.

It is found in the nucleus. Functionally, enhancer-binding elongation factor that specifically binds enhancers in embryonic stem cells (ES cells), marks them, and is required for their future activation during stem cell specification. Elongation factor component of the super elongation complex (SEC), a complex required to increase the catalytic rate of RNA polymerase II transcription by suppressing transient pausing by the polymerase at multiple sites along the DNA. Component of the little elongation complex (LEC), a complex required to regulate small nuclear RNA (snRNA) gene transcription by RNA polymerase II and III. Does not only bind to enhancer regions of active genes, but also marks the enhancers that are in a poised or inactive state in ES cells and is required for establishing proper RNA polymerase II occupancy at developmentally regulated genes in a cohesin-dependent manner. Probably required for priming developmentally regulated genes for later recruitment of the super elongation complex (SEC), for transcriptional activation during differentiation. Required for recruitment of P-TEFb within SEC during differentiation. Probably preloaded on germ cell chromatin, suggesting that it may prime gene activation by marking enhancers as early as in the germ cells. Promoting epithelial-mesenchymal transition (EMT). The chain is RNA polymerase II elongation factor ELL3 (ELL3) from Bos taurus (Bovine).